Here is a 545-residue protein sequence, read N- to C-terminus: uncharacterized protein (545 aa).

2 disordered regions span residues 1–162 (MSSG…DPQE) and 200–250 (YPPV…EPPP). Polar residues predominate over residues 86 to 100 (NYRSHSSADYLTPNS). 2 stretches are compositionally biased toward low complexity: residues 109 to 128 (TTPR…TATK) and 141 to 152 (SGASTSSGTSST). 2 stretches are compositionally biased toward polar residues: residues 212 to 221 (SSRTGTLQRT) and 228 to 244 (ISST…QMQS). Residues 458–540 (RVLVEKMMPG…VTITLLPAVG (83 aa)) form the PDZ domain.

This is an uncharacterized protein from Caenorhabditis elegans.